Here is a 642-residue protein sequence, read N- to C-terminus: uncharacterized protein (642 aa).

Over 1–15 (MVHITLGQAIWVSVK) the chain is Cytoplasmic. The chain crosses the membrane as a helical span at residues 16-36 (PIIKIYLIIGVGFLMAKMGIL). Residues 37–42 (TVEATR) are Extracellular-facing. The chain crosses the membrane as a helical span at residues 43–63 (IISDIVLTVLLPSLSFNKIVA). Topologically, residues 64 to 73 (NIEDKDIKSV) are cytoplasmic. A helical membrane pass occupies residues 74-94 (GIICLSALLIFGSGFFFAYVV). Over 95–104 (RLFLPVPKQW) the chain is Extracellular. A helical membrane pass occupies residues 105 to 125 (YGGILAGGMFPNISDLPIAYL). The Cytoplasmic segment spans residues 126–142 (QSMDQGLVFSEEEGNKG). A helical transmembrane segment spans residues 143–163 (VANVIIFLTMFLICIFNLGGF). Residues 164 to 460 (RLIESDFEYN…FLKNCLRPCS (297 aa)) lie on the Extracellular side of the membrane. Disordered stretches follow at residues 183 to 206 (ETTKTQPAVSANTTNTDTSERFFS) and 227 to 324 (GTKG…SQPR). Composition is skewed to polar residues over residues 240 to 260 (RRSTNSIAPLSLPDTSSNSKI) and 272 to 312 (IACT…SSID). A helical membrane pass occupies residues 461-481 (MAVIIALTVAFIPWVKALFVT). The Cytoplasmic segment spans residues 482–499 (TANTPHISQAPDNAPPLS). A helical transmembrane segment spans residues 500–520 (FFMDFTGYVGAACVPFGLILL). Over 521–538 (GATLGRLKIGNLYPGFWK) the chain is Extracellular. The helical transmembrane segment at 539–559 (AAVTLVILRQCVMPIFGVLWC) threads the bilayer. Residues 560-574 (DRLVKAGWVNWQDDR) are Cytoplasmic-facing. A helical transmembrane segment spans residues 575–595 (MLLFVIAISWNLPTMTTLIYF). Residues 596–614 (TASFTPPETTAPIQMECVS) are Extracellular-facing. The helical transmembrane segment at 615 to 635 (FFLMLQYPLMVVSLPFLVSYF) threads the bilayer. Residues 636-642 (LKVQMNL) lie on the Cytoplasmic side of the membrane.

The protein belongs to the auxin efflux carrier (TC 2.A.69) family.

Its subcellular location is the membrane. This is an uncharacterized protein from Saccharomyces cerevisiae (strain ATCC 204508 / S288c) (Baker's yeast).